The following is a 95-amino-acid chain: Transcription and mRNA export factor ENY2-1 (95 aa).

This sequence belongs to the ENY2 family. Component of the nuclear pore complex (NPC)-associated TREX-2 complex (transcription and export complex 2). Component of the SAGA transcription coactivator-HAT complex. Within the SAGA complex, participates in a subcomplex of SAGA called the DUB module (deubiquitination module).

The protein localises to the nucleus. Its subcellular location is the nucleoplasm. In terms of biological role, involved in mRNA export coupled transcription activation by association with both the TREX-2 and the SAGA complexes. The transcription regulatory histone acetylation (HAT) complex SAGA is a multiprotein complex that activates transcription by remodeling chromatin and mediating histone acetylation and deubiquitination. Within the SAGA complex, participates in a subcomplex that specifically deubiquitinates histones. The SAGA complex is recruited to specific gene promoters by activators, where it is required for transcription. The TREX-2 complex functions in docking export-competent ribonucleoprotein particles (mRNPs) to the nuclear entrance of the nuclear pore complex (nuclear basket). TREX-2 participates in mRNA export and accurate chromatin positioning in the nucleus by tethering genes to the nuclear periphery. This is Transcription and mRNA export factor ENY2-1 (eny2-1) from Salmo salar (Atlantic salmon).